We begin with the raw amino-acid sequence, 180 residues long: uncharacterized protein (180 aa).

Residues 1 to 30 (MRHKIITFILAVVVIIIIGNMIGGGGGSEA) form the signal peptide. Residues 25 to 46 (GGGSEATSKTSSSSKAETEKTY) are disordered. The segment covering 29–39 (EATSKTSSSSK) has biased composition (low complexity).

The protein resides in the secreted. This is an uncharacterized protein from Bacillus subtilis (strain 168).